The primary structure comprises 268 residues: Tryptophan synthase alpha chain (268 aa).

Catalysis depends on proton acceptor residues Glu-40 and Asp-51.

It belongs to the TrpA family. As to quaternary structure, tetramer of two alpha and two beta chains.

It carries out the reaction (1S,2R)-1-C-(indol-3-yl)glycerol 3-phosphate + L-serine = D-glyceraldehyde 3-phosphate + L-tryptophan + H2O. Its pathway is amino-acid biosynthesis; L-tryptophan biosynthesis; L-tryptophan from chorismate: step 5/5. Its function is as follows. The alpha subunit is responsible for the aldol cleavage of indoleglycerol phosphate to indole and glyceraldehyde 3-phosphate. The polypeptide is Tryptophan synthase alpha chain (Geobacillus thermodenitrificans (strain NG80-2)).